Consider the following 466-residue polypeptide: Zinc finger protein NUTCRACKER (466 aa).

The span at 1 to 23 (MTSEVLQTISSGSGFAQPQSSST) shows a compositional bias: polar residues. A disordered region spans residues 1–29 (MTSEVLQTISSGSGFAQPQSSSTLDHDES). The residue at position 56 (Ser56) is a Phosphoserine. The segment at 66–88 (FLCEVCGKGFQRDQNLQLHRRGH) adopts a C2H2-type 1 zinc-finger fold. Thr98 bears the Phosphothreonine; by KIN10 mark. A C2H2-type 2 zinc finger spans residues 107–137 (YVCPEKTCVHHHSSRALGDLTGIKKHFCRKH). The Nuclear localization signal motif lies at 134–141 (CRKHGEKK). A C2H2-type 2; degenerate zinc finger spans residues 142-165 (WTCEKCAKRYAVQSDWKAHSKTCG). The Zn(2+) site is built by Cys144, Cys147, His160, Cys164, Cys171, and Cys173. Residues 169–192 (YRCDCGTIFSRRDSFITHRAFCDA) form a CCHC-type 2; atypical zinc finger. Residues Ser178 and Ser182 each carry the phosphoserine; by KIN10 modification. Positions 179-191 (RRDSFITHRAFCD) are SHR-binding. His186 and Cys190 together coordinate Zn(2+).

As to quaternary structure, interacts with AKIN10. Inhibition of transcription factor activity by KIN10-mediated phosphorylation at Thr-98, Ser-178 and Ser-182 under sugar deprivation conditions, thus delaying flowering. As to expression, highly expressed in vegetative organs and at lower levels in flowers and siliques. Expressed predominantly in roots. In roots, present in cortex, endodermis, and pericycle layer.

Its subcellular location is the nucleus. In terms of biological role, transcription activator that binds to the DNA sequence 5'-CTTTTGTCC-3'. Regulates photoperiodic flowering by modulating sugar transport and metabolism. Regulates SUS1 and SUS4. Transcription factor that regulates tissue boundaries and asymmetric cell division. Contributes to the sequestration of 'SHORT-ROOT' to the nucleus. In Arabidopsis thaliana (Mouse-ear cress), this protein is Zinc finger protein NUTCRACKER.